The primary structure comprises 229 residues: GTP-binding protein Di-Ras3 (229 aa).

GTP is bound by residues Gly-44 to Ser-51, Arg-63 to Thr-69, Asp-91 to Gly-95, Asn-152 to Asp-155, and Ala-182 to Lys-183. Residues Tyr-66–Tyr-74 carry the Effector region motif. Position 226 is a cysteine methyl ester (Cys-226). A lipid anchor (S-geranylgeranyl cysteine) is attached at Cys-226. Residues Ile-227–Met-229 constitute a propeptide, removed in mature form.

This sequence belongs to the small GTPase superfamily. Di-Ras family. As to expression, expressed in normal ovarian and breast epithelial cells but not in ovarian and breast cancers.

Its subcellular location is the cell membrane. The chain is GTP-binding protein Di-Ras3 (DIRAS3) from Homo sapiens (Human).